Here is a 210-residue protein sequence, read N- to C-terminus: Thymidylate kinase (210 aa).

10–17 (GPEGAGKS) contributes to the ATP binding site.

This sequence belongs to the thymidylate kinase family.

The catalysed reaction is dTMP + ATP = dTDP + ADP. In terms of biological role, phosphorylation of dTMP to form dTDP in both de novo and salvage pathways of dTTP synthesis. This is Thymidylate kinase from Pseudomonas entomophila (strain L48).